The primary structure comprises 497 residues: Acetyltransferase adrJ (497 aa).

Residues His-174 and Asp-422 each act as proton acceptor in the active site. The segment at 430–451 (SSAQSSSQNTQKKGKPSYVNGV) is disordered.

The protein belongs to the plant acyltransferase family. In terms of assembly, monomer.

The protein operates within secondary metabolite biosynthesis; terpenoid biosynthesis. Its function is as follows. Acetyltransferase; part of the gene cluster that mediates the biosynthesis of andrastins, meroterpenoid compounds that exhibit inhibitory activity against ras farnesyltransferase, suggesting that they could be promising leads for antitumor agents. The first step of the pathway is the synthesis of 3,5-dimethylorsellinic acid (DMOA) by the polyketide synthase adrD via condensation of one acetyl-CoA starter unit with 3 malonyl-CoA units and 2 methylations. DMAO is then converted to farnesyl-DMAO by the prenyltransferase adrG. The methyltransferase adrK catalyzes the methylation of the carboxyl group of farnesyl-DMAO to farnesyl-DMAO methyl ester which is further converted to epoxyfarnesyl-DMAO methyl ester by the FAD-dependent monooxygenase adrH. The terpene cyclase adrI then catalyzes the carbon skeletal rearrangement to generate the andrastin E, the first compound in the pathway having the andrastin scaffold, with the tetracyclic ring system. The post-cyclization tailoring enzymes adrF, adrE, adrJ, and adrA, are involved in the conversion of andrastin E into andrastin A. The short chain dehydrogenase adrF is responsible for the oxidation of the C-3 a hydroxyl group of andrastin E to yield the corresponding ketone, andrastin D. The ketoreductase adrE stereoselectively reduces the carbonyl moiety to reverse the stereochemistry of the C-3 position to yield andrastin F. The acetyltransferase adrJ is the acetyltransferase that attaches the acetyl group to the C-3 hydroxyl group of andrastin F to yield andrastin C. Finally, the cytochrome P450 monooxygenase adrA catalyzes two sequential oxidation reactions of the C-23 methyl group, to generate the corresponding alcohol andrastin B, and aldehyde andrastin A. The polypeptide is Acetyltransferase adrJ (Penicillium rubens (strain ATCC 28089 / DSM 1075 / NRRL 1951 / Wisconsin 54-1255) (Penicillium chrysogenum)).